Reading from the N-terminus, the 442-residue chain is Probable carboxypeptidase PADG_04062 (442 aa).

Residues 1-20 (MKLQYLVALLSVQAVPPVTA) form the signal peptide. N-linked (GlcNAc...) asparagine glycosylation occurs at Asn-102. Asp-160 contributes to the Zn(2+) binding site. Glu-192 acts as the Proton acceptor in catalysis. A Zn(2+)-binding site is contributed by Glu-193. The N-linked (GlcNAc...) asparagine glycan is linked to Asn-343.

It belongs to the peptidase M20A family. It depends on Zn(2+) as a cofactor.

The protein localises to the secreted. In Paracoccidioides brasiliensis (strain Pb18), this protein is Probable carboxypeptidase PADG_04062.